The primary structure comprises 264 residues: Thymidylate synthase 2 (264 aa).

Arginine 21 contributes to the dUMP binding site. A (6R)-5,10-methylene-5,6,7,8-tetrahydrofolate-binding site is contributed by histidine 51. 126–127 (RR) lines the dUMP pocket. Catalysis depends on cysteine 146, which acts as the Nucleophile. DUMP is bound by residues 166–169 (RSAD), asparagine 177, and 207–209 (HIY). Aspartate 169 contributes to the (6R)-5,10-methylene-5,6,7,8-tetrahydrofolate binding site. Serine 263 lines the (6R)-5,10-methylene-5,6,7,8-tetrahydrofolate pocket.

Belongs to the thymidylate synthase family. Bacterial-type ThyA subfamily. Homodimer.

It localises to the cytoplasm. The catalysed reaction is dUMP + (6R)-5,10-methylene-5,6,7,8-tetrahydrofolate = 7,8-dihydrofolate + dTMP. It participates in pyrimidine metabolism; dTTP biosynthesis. In terms of biological role, catalyzes the reductive methylation of 2'-deoxyuridine-5'-monophosphate (dUMP) to 2'-deoxythymidine-5'-monophosphate (dTMP) while utilizing 5,10-methylenetetrahydrofolate (mTHF) as the methyl donor and reductant in the reaction, yielding dihydrofolate (DHF) as a by-product. This enzymatic reaction provides an intracellular de novo source of dTMP, an essential precursor for DNA biosynthesis. The protein is Thymidylate synthase 2 of Bacillus amyloliquefaciens (Bacillus velezensis).